Consider the following 271-residue polypeptide: GTP cyclohydrolase FolE2 (271 aa).

Belongs to the GTP cyclohydrolase IV family.

It carries out the reaction GTP + H2O = 7,8-dihydroneopterin 3'-triphosphate + formate + H(+). The protein operates within cofactor biosynthesis; 7,8-dihydroneopterin triphosphate biosynthesis; 7,8-dihydroneopterin triphosphate from GTP: step 1/1. Functionally, converts GTP to 7,8-dihydroneopterin triphosphate. The polypeptide is GTP cyclohydrolase FolE2 (Geotalea uraniireducens (strain Rf4) (Geobacter uraniireducens)).